The chain runs to 152 residues: Endoribonuclease YbeY (152 aa).

Zn(2+)-binding residues include histidine 114, histidine 118, and histidine 124.

The protein belongs to the endoribonuclease YbeY family. Zn(2+) serves as cofactor.

It localises to the cytoplasm. Functionally, single strand-specific metallo-endoribonuclease involved in late-stage 70S ribosome quality control and in maturation of the 3' terminus of the 16S rRNA. The protein is Endoribonuclease YbeY of Wigglesworthia glossinidia brevipalpis.